A 242-amino-acid chain; its full sequence is 1-(5-phosphoribosyl)-5-[(5-phosphoribosylamino)methylideneamino] imidazole-4-carboxamide isomerase (242 aa).

Asp-10 acts as the Proton acceptor in catalysis. The active-site Proton donor is the Asp-131.

It belongs to the HisA/HisF family.

It localises to the cytoplasm. It catalyses the reaction 1-(5-phospho-beta-D-ribosyl)-5-[(5-phospho-beta-D-ribosylamino)methylideneamino]imidazole-4-carboxamide = 5-[(5-phospho-1-deoxy-D-ribulos-1-ylimino)methylamino]-1-(5-phospho-beta-D-ribosyl)imidazole-4-carboxamide. It functions in the pathway amino-acid biosynthesis; L-histidine biosynthesis; L-histidine from 5-phospho-alpha-D-ribose 1-diphosphate: step 4/9. This chain is 1-(5-phosphoribosyl)-5-[(5-phosphoribosylamino)methylideneamino] imidazole-4-carboxamide isomerase, found in Bifidobacterium animalis subsp. lactis (strain AD011).